The following is a 249-amino-acid chain: Fasciclin-like arabinogalactan protein 12 (249 aa).

The first 24 residues, 1–24, serve as a signal peptide directing secretion; the sequence is MEHSLIILLFTVLLLLTTTPGILS. The FAS1 domain maps to 37–181; it reads PTNVTKILEK…LAVYQVDKVL (145 aa). Residues Asn-39, Asn-71, Asn-143, Asn-152, and Asn-159 are each glycosylated (N-linked (GlcNAc...) asparagine). The disordered stretch occupies residues 186–219; sequence VFDPRPPAPAPAPSVSKSKKKKDDSDSSSDDSPA. Asp-220 carries GPI-anchor amidated aspartate lipidation. The propeptide at 221-249 is removed in mature form; sequence ASFALRNVGSVCDAVSFCVMSVMLAWFYL.

Belongs to the fasciclin-like AGP family.

It localises to the cell membrane. Its function is as follows. May be a cell surface adhesion protein. The protein is Fasciclin-like arabinogalactan protein 12 (FLA12) of Arabidopsis thaliana (Mouse-ear cress).